The sequence spans 180 residues: Ribosome-recycling factor (180 aa).

This sequence belongs to the RRF family.

It localises to the cytoplasm. In terms of biological role, responsible for the release of ribosomes from messenger RNA at the termination of protein biosynthesis. May increase the efficiency of translation by recycling ribosomes from one round of translation to another. This is Ribosome-recycling factor from Chlamydia abortus (strain DSM 27085 / S26/3) (Chlamydophila abortus).